A 130-amino-acid polypeptide reads, in one-letter code: S-adenosylmethionine decarboxylase proenzyme (130 aa).

The active-site Schiff-base intermediate with substrate; via pyruvic acid is S63. S63 carries the pyruvic acid (Ser); by autocatalysis modification. The Proton acceptor; for processing activity role is filled by H68. Catalysis depends on C83, which acts as the Proton donor; for catalytic activity.

It belongs to the prokaryotic AdoMetDC family. Type 1 subfamily. As to quaternary structure, heterotetramer of two alpha and two beta chains arranged as a dimer of alpha/beta heterodimers. Pyruvate is required as a cofactor. Post-translationally, is synthesized initially as an inactive proenzyme. Formation of the active enzyme involves a self-maturation process in which the active site pyruvoyl group is generated from an internal serine residue via an autocatalytic post-translational modification. Two non-identical subunits are generated from the proenzyme in this reaction, and the pyruvate is formed at the N-terminus of the alpha chain, which is derived from the carboxyl end of the proenzyme. The post-translation cleavage follows an unusual pathway, termed non-hydrolytic serinolysis, in which the side chain hydroxyl group of the serine supplies its oxygen atom to form the C-terminus of the beta chain, while the remainder of the serine residue undergoes an oxidative deamination to produce ammonia and the pyruvoyl group blocking the N-terminus of the alpha chain.

The enzyme catalyses S-adenosyl-L-methionine + H(+) = S-adenosyl 3-(methylsulfanyl)propylamine + CO2. Its pathway is amine and polyamine biosynthesis; S-adenosylmethioninamine biosynthesis; S-adenosylmethioninamine from S-adenosyl-L-methionine: step 1/1. Catalyzes the decarboxylation of S-adenosylmethionine to S-adenosylmethioninamine (dcAdoMet), the propylamine donor required for the synthesis of the polyamines spermine and spermidine from the diamine putrescine. This is S-adenosylmethionine decarboxylase proenzyme (speH) from Thermotoga maritima (strain ATCC 43589 / DSM 3109 / JCM 10099 / NBRC 100826 / MSB8).